The following is a 336-amino-acid chain: MAELKLGYKASAEQFAPRELVELAVLAEAAGMDSATVSDHFQPWRHEGGHAPFSLAWMTAVGERTQRLVLGTSVLTPTFRYNPAVIAQAFATMGCLYPGRVFLGVGTGEALNEIATGYIGQWPEFKERFARLRESVKLMRELWLGDRVDFDGEYYKLRGASIYDVPEGGIPVYIAAGGPVVAKYAGRAGDGFICTSGKGEELYKDKLIPAVREGAEAAGRNAEDIDRMIEIKISYDPDPELALENTRFWAPLSLTPEQKHSIDDPIEMEKAADALPIEQVAKRWIVASDPDEAVEKVGQYVTWGLNHLVFHAPGHDQRRFLDLFKKDLEPRLRKLG.

Residue D39 coordinates coenzyme F420-(gamma-Glu)n. H40 acts as the Proton donor in catalysis. Residues T76 and T107–G108 each bind coenzyme F420-(gamma-Glu)n. E109 (proton acceptor) is an active-site residue. Residues N112, G177–G178, and V180–V181 contribute to the coenzyme F420-(gamma-Glu)n site. Positions 195, 198, 259, and 283 each coordinate substrate.

The protein belongs to the F420-dependent glucose-6-phosphate dehydrogenase family. Homodimer.

The catalysed reaction is oxidized coenzyme F420-(gamma-L-Glu)(n) + D-glucose 6-phosphate + H(+) = 6-phospho-D-glucono-1,5-lactone + reduced coenzyme F420-(gamma-L-Glu)(n). Its function is as follows. Catalyzes the coenzyme F420-dependent oxidation of glucose 6-phosphate (G6P) to 6-phosphogluconolactone. Appears to have a role in resistance to oxidative stress, via its consumption of G6P that serves as a source of reducing power to combat oxidative stress in mycobacteria. In Mycolicibacterium fortuitum (Mycobacterium fortuitum), this protein is F420-dependent glucose-6-phosphate dehydrogenase.